A 346-amino-acid polypeptide reads, in one-letter code: Cyclin-dependent kinase 20 (346 aa).

The 285-residue stretch at 4–288 (YCILGRIGEG…ASQALLHQYF (285 aa)) folds into the Protein kinase domain. Residues 10–18 (IGEGAHGIV) and Lys33 contribute to the ATP site. Catalysis depends on Asp127, which acts as the Proton acceptor. Residues 298–324 (SELPIPQRPGGPTPKAHPGPPHVHDFH) are disordered. The segment covering 303–318 (PQRPGGPTPKAHPGPP) has biased composition (pro residues).

This sequence belongs to the protein kinase superfamily. CMGC Ser/Thr protein kinase family. CDC2/CDKX subfamily. As to quaternary structure, monomer. Interacts with TBC1D32 and MAK.

The protein localises to the nucleus. It localises to the cytoplasm. Its subcellular location is the cell projection. The protein resides in the cilium. It carries out the reaction L-seryl-[protein] + ATP = O-phospho-L-seryl-[protein] + ADP + H(+). The enzyme catalyses L-threonyl-[protein] + ATP = O-phospho-L-threonyl-[protein] + ADP + H(+). In terms of biological role, required for high-level Shh responses in the developing neural tube. Together with TBC1D32, controls the structure of the primary cilium by coordinating assembly of the ciliary membrane and axoneme, allowing GLI2 to be properly activated in response to SHH signaling. Involved in cell growth. Activates CDK2, a kinase involved in the control of the cell cycle, by phosphorylating residue 'Thr-160'. This chain is Cyclin-dependent kinase 20 (Cdk20), found in Rattus norvegicus (Rat).